A 423-amino-acid chain; its full sequence is Glycine amidinotransferase, mitochondrial (423 aa).

Residues 1–48 (MLRVRCLRGGSRGAEAVHYIGSRLGRTLTGWVQRTFQSTQAATASSRN) constitute a mitochondrion transit peptide. The span at 39 to 51 (TQAATASSRNSSA) shows a compositional bias: low complexity. Residues 39 to 65 (TQAATASSRNSSAADDKATEPLPKDCP) form a disordered region. 2 positions are modified to phosphoserine: Ser-46 and Ser-49. The span at 52–61 (ADDKATEPLP) shows a compositional bias: basic and acidic residues. Arginine is bound at residue Asp-170. Residues Asp-254 and His-303 contribute to the active site. Arginine is bound by residues Asp-305, Arg-322, Ser-354, and Ser-355. An N6-acetyllysine modification is found at Lys-385. Residue Cys-407 is the Amidino-cysteine intermediate of the active site.

The protein belongs to the amidinotransferase family. As to quaternary structure, homodimer.

It localises to the mitochondrion inner membrane. It carries out the reaction L-arginine + glycine = guanidinoacetate + L-ornithine. It catalyses the reaction 4-aminobutanoate + L-arginine = 4-guanidinobutanoate + L-ornithine. The catalysed reaction is beta-alanine + L-arginine = 3-guanidinopropanoate + L-ornithine. The enzyme catalyses taurine + L-arginine = taurocyamine + L-ornithine. The protein operates within amine and polyamine biosynthesis; creatine biosynthesis; creatine from L-arginine and glycine: step 1/2. Its function is as follows. Transamidinase that catalyzes the transfer of the amidino group of L-arginine onto the amino moiety of acceptor metabolites such as glycine, beta-alanine, gamma-aminobutyric acid (GABA) and taurine yielding the corresponding guanidine derivatives. Catalyzes the rate-limiting step of creatine biosynthesis, namely the transfer of the amidino group from L-arginine to glycine to generate guanidinoacetate, which is then methylated by GAMT to form creatine. Provides creatine as a source for ATP generation in tissues with high energy demands, in particular skeletal muscle, heart and brain. The chain is Glycine amidinotransferase, mitochondrial (GATM) from Pongo abelii (Sumatran orangutan).